Consider the following 213-residue polypeptide: ATP phosphoribosyltransferase (213 aa).

Belongs to the ATP phosphoribosyltransferase family. Short subfamily. Heteromultimer composed of HisG and HisZ subunits.

The protein localises to the cytoplasm. The enzyme catalyses 1-(5-phospho-beta-D-ribosyl)-ATP + diphosphate = 5-phospho-alpha-D-ribose 1-diphosphate + ATP. It participates in amino-acid biosynthesis; L-histidine biosynthesis; L-histidine from 5-phospho-alpha-D-ribose 1-diphosphate: step 1/9. Its function is as follows. Catalyzes the condensation of ATP and 5-phosphoribose 1-diphosphate to form N'-(5'-phosphoribosyl)-ATP (PR-ATP). Has a crucial role in the pathway because the rate of histidine biosynthesis seems to be controlled primarily by regulation of HisG enzymatic activity. This chain is ATP phosphoribosyltransferase, found in Bacillus velezensis (strain DSM 23117 / BGSC 10A6 / LMG 26770 / FZB42) (Bacillus amyloliquefaciens subsp. plantarum).